Consider the following 126-residue polypeptide: Holo-[acyl-carrier-protein] synthase (126 aa).

Mg(2+) contacts are provided by Asp-9 and Glu-58.

It belongs to the P-Pant transferase superfamily. AcpS family. Mg(2+) serves as cofactor.

It localises to the cytoplasm. It carries out the reaction apo-[ACP] + CoA = holo-[ACP] + adenosine 3',5'-bisphosphate + H(+). Functionally, transfers the 4'-phosphopantetheine moiety from coenzyme A to a Ser of acyl-carrier-protein. The chain is Holo-[acyl-carrier-protein] synthase from Salmonella choleraesuis (strain SC-B67).